The sequence spans 235 residues: Protein Thf1 (235 aa).

The stretch at 183 to 204 (DKLNKDLELYRSNLDKMAQALV) forms a coiled coil. The tract at residues 213-235 (DRKKREQRKQQSTAPVAPPSSNE) is disordered. Residues 222–235 (QQSTAPVAPPSSNE) show a composition bias toward polar residues.

Belongs to the THF1 family.

Functionally, may be involved in photosynthetic membrane biogenesis. The polypeptide is Protein Thf1 (Nostoc punctiforme (strain ATCC 29133 / PCC 73102)).